Reading from the N-terminus, the 140-residue chain is uncharacterized protein (140 aa).

In terms of domain architecture, VOC spans 3-131; the sequence is RLDHIGIAVF…NGVLVELCEP (129 aa). A divalent metal cation is bound by residues His-6, Glu-53, His-77, and Glu-127.

The protein belongs to the methylmalonyl-CoA epimerase family.

This is an uncharacterized protein from Bacillus subtilis (strain 168).